A 213-amino-acid chain; its full sequence is tRNA (guanine-N(7)-)-methyltransferase (213 aa).

The S-adenosyl-L-methionine site is built by aspartate 44, glutamate 69, asparagine 96, and aspartate 119. The active site involves aspartate 119. Lysine 123 and aspartate 155 together coordinate substrate.

It belongs to the class I-like SAM-binding methyltransferase superfamily. TrmB family.

The enzyme catalyses guanosine(46) in tRNA + S-adenosyl-L-methionine = N(7)-methylguanosine(46) in tRNA + S-adenosyl-L-homocysteine. The protein operates within tRNA modification; N(7)-methylguanine-tRNA biosynthesis. Its function is as follows. Catalyzes the formation of N(7)-methylguanine at position 46 (m7G46) in tRNA. The sequence is that of tRNA (guanine-N(7)-)-methyltransferase from Thermosynechococcus vestitus (strain NIES-2133 / IAM M-273 / BP-1).